The sequence spans 126 residues: Probable 4-amino-4-deoxy-L-arabinose-phosphoundecaprenol flippase subunit ArnF (126 aa).

Residues 1 to 4 (MKGY) lie on the Cytoplasmic side of the membrane. Residues 5-25 (IWGLISVLLVTIAQLLLKWGV) form a helical membrane-spanning segment. Over 26–49 (VNLPALNLGLHWFDIEWLWSHRHS) the chain is Periplasmic. Residues 50 to 70 (LVAVMAGLAGYLLSMLCWLFT) traverse the membrane as a helical segment. Topologically, residues 71–79 (LKYLPLNKA) are cytoplasmic. A helical transmembrane segment spans residues 80–100 (YPLISLSYVFVYLMVALLPWF). Topologically, residues 101–102 (NE) are periplasmic. Residues 103–123 (TITLLKTAGVIFILYGVWLIS) form a helical membrane-spanning segment. The Cytoplasmic segment spans residues 124-126 (RPE).

Belongs to the ArnF family. Heterodimer of ArnE and ArnF.

It localises to the cell inner membrane. The protein operates within bacterial outer membrane biogenesis; lipopolysaccharide biosynthesis. Its function is as follows. Translocates 4-amino-4-deoxy-L-arabinose-phosphoundecaprenol (alpha-L-Ara4N-phosphoundecaprenol) from the cytoplasmic to the periplasmic side of the inner membrane. The chain is Probable 4-amino-4-deoxy-L-arabinose-phosphoundecaprenol flippase subunit ArnF from Photorhabdus laumondii subsp. laumondii (strain DSM 15139 / CIP 105565 / TT01) (Photorhabdus luminescens subsp. laumondii).